Reading from the N-terminus, the 371-residue chain is tRNA-specific 2-thiouridylase MnmA (371 aa).

Residues 13 to 20 (GMSGGVDS) and Met39 each bind ATP. An interaction with target base in tRNA region spans residues 99 to 101 (NPD). Cys104 serves as the catalytic Nucleophile. Cys104 and Cys200 are joined by a disulfide. Gly128 contributes to the ATP binding site. The interval 150 to 152 (KDQ) is interaction with tRNA. The Cysteine persulfide intermediate role is filled by Cys200. Residues 308-309 (RY) are interaction with tRNA.

Belongs to the MnmA/TRMU family.

The protein localises to the cytoplasm. The enzyme catalyses S-sulfanyl-L-cysteinyl-[protein] + uridine(34) in tRNA + AH2 + ATP = 2-thiouridine(34) in tRNA + L-cysteinyl-[protein] + A + AMP + diphosphate + H(+). Its function is as follows. Catalyzes the 2-thiolation of uridine at the wobble position (U34) of tRNA, leading to the formation of s(2)U34. This is tRNA-specific 2-thiouridylase MnmA from Listeria monocytogenes serovar 1/2a (strain ATCC BAA-679 / EGD-e).